The primary structure comprises 468 residues: MKHRIQHIHFVGVGGSGMSGIAEVLLNLGYTISGSDLNESAVTRRLAELGMRIAIGHDRANVAGAGAIVTSTAVAGDNPEVLAARAARIPVVPRAVMLAELMRLKRGIAVAGTHGKTTTTSLVASVLAAGGLDPTFVIGGRLTSAGANARLGQGEYIVVEADESDASFLNLLPVMAIVTNIDADHMDTYGHDVARLKSAFIEFTQRLPFYGSAILCADDANVREIMPFVSRPITTYGLSPDAQVCAQDVQADGTRMRFTVQRRDRDVVLPALQVELNLPGLHNVRNALAAIAVATELGVDDAAIREALAAFKGVGRRFTQWGDLPVPAAHGGGTFTLVDDYGHHPVEMAATLAAARGAWPQRRIVLAFQPHRYTRTRDCFEDFVRVLGSADGVLLTEVYAAGEAPLVAADGRALSRALRVAGKVEPVFVEDVGELPQAILDFVRDGDVVVVMGAGSISKTPALVGELA.

112–118 (GTHGKTT) lines the ATP pocket.

Belongs to the MurCDEF family.

It is found in the cytoplasm. It catalyses the reaction UDP-N-acetyl-alpha-D-muramate + L-alanine + ATP = UDP-N-acetyl-alpha-D-muramoyl-L-alanine + ADP + phosphate + H(+). Its pathway is cell wall biogenesis; peptidoglycan biosynthesis. Functionally, cell wall formation. In Bordetella bronchiseptica (strain ATCC BAA-588 / NCTC 13252 / RB50) (Alcaligenes bronchisepticus), this protein is UDP-N-acetylmuramate--L-alanine ligase.